A 346-amino-acid polypeptide reads, in one-letter code: Transcription termination factor 4, mitochondrial (346 aa).

The transit peptide at 1–42 (MASLGRQVPEWHRLLALSWACLVRQTPHLREQKQMSPSLSCK) directs the protein to the mitochondrion. MTERF repeat units lie at residues 142–172 (FNALKKNPQLLKLSSMQMKRRSSYLRKLGLG), 177–204 (KRVLSVCPEVFTMHQRDIDRVVKVLREK), 209–239 (AQHITDVLHRCPTVLQEDPNELEYKFQYAYF), 245–270 (HLDIVRTNFLQYSITKIKQRHIYLER), and 290–318 (LRNILRVSEAEFLARTACSSVEEFQVFKK). Positions 310-327 (VEEFQVFKKLLDQEEEEE) are dimerization with NSUN4. The disordered stretch occupies residues 321–346 (DQEEEEESESHASEEEEEEEEEEELL). Residues 322–346 (QEEEEESESHASEEEEEEEEEEELL) are compositionally biased toward acidic residues.

The protein belongs to the mTERF family. Heterodimer with NSUN4; this interaction may be required for NSUN4 recruitment to the mitochondrial large ribosomal subunit. As to expression, widely expressed, with highest levels in liver, followed by testis, kidney and brain.

The protein localises to the mitochondrion. Its function is as follows. Regulator of mitochondrial ribosome biogenesis and translation. Binds to mitochondrial ribosomal RNAs 16S, 12S and 7S. Targets NSUN4 RNA methyltransferase to the mitochondrial large ribosomal subunit. The polypeptide is Transcription termination factor 4, mitochondrial (Mterf4) (Mus musculus (Mouse)).